A 383-amino-acid polypeptide reads, in one-letter code: S-adenosylmethionine:tRNA ribosyltransferase-isomerase (383 aa).

It belongs to the QueA family. In terms of assembly, monomer.

The protein localises to the cytoplasm. The catalysed reaction is 7-aminomethyl-7-carbaguanosine(34) in tRNA + S-adenosyl-L-methionine = epoxyqueuosine(34) in tRNA + adenine + L-methionine + 2 H(+). Its pathway is tRNA modification; tRNA-queuosine biosynthesis. In terms of biological role, transfers and isomerizes the ribose moiety from AdoMet to the 7-aminomethyl group of 7-deazaguanine (preQ1-tRNA) to give epoxyqueuosine (oQ-tRNA). The protein is S-adenosylmethionine:tRNA ribosyltransferase-isomerase of Rickettsia prowazekii (strain Madrid E).